Here is a 156-residue protein sequence, read N- to C-terminus: CD-NTase-associated protein 8 (156 aa).

This sequence belongs to the bacterial HORMA family. HORMA3 subfamily. In terms of assembly, interacts with Cap7 (also called HORMA2) and CdnC; forms CdnD:Cap7:Cap8 (also called CdnD:HORMA2:HORMA3) complexes with stoichiometries of 1:1:1 and 2:1:1.

Its function is as follows. CBASS (cyclic oligonucleotide-based antiphage signaling system) provides immunity against bacteriophage. The CD-NTase protein synthesizes cyclic nucleotides in response to infection; these serve as specific second messenger signals. The signals activate a diverse range of effectors, leading to bacterial cell death and thus abortive phage infection. A type III-C(AAA) CBASS system. A member of the CBASS system in this bacteria. It does not seem to bind a closure peptide, its exact function is unknown. This chain is CD-NTase-associated protein 8, found in Pseudomonas aeruginosa.